We begin with the raw amino-acid sequence, 319 residues long: Ribonuclease Z (319 aa).

The Zn(2+) site is built by His62, His64, Asp66, His67, His145, Asp216, and His274. The active-site Proton acceptor is the Asp66.

Belongs to the RNase Z family. In terms of assembly, homodimer. It depends on Zn(2+) as a cofactor.

The enzyme catalyses Endonucleolytic cleavage of RNA, removing extra 3' nucleotides from tRNA precursor, generating 3' termini of tRNAs. A 3'-hydroxy group is left at the tRNA terminus and a 5'-phosphoryl group is left at the trailer molecule.. In terms of biological role, zinc phosphodiesterase, which displays some tRNA 3'-processing endonuclease activity. Probably involved in tRNA maturation, by removing a 3'-trailer from precursor tRNA. The sequence is that of Ribonuclease Z from Synechococcus sp. (strain CC9902).